We begin with the raw amino-acid sequence, 217 residues long: Protein-L-isoaspartate O-methyltransferase (217 aa).

Serine 64 is a catalytic residue.

This sequence belongs to the methyltransferase superfamily. L-isoaspartyl/D-aspartyl protein methyltransferase family.

Its subcellular location is the cytoplasm. It catalyses the reaction [protein]-L-isoaspartate + S-adenosyl-L-methionine = [protein]-L-isoaspartate alpha-methyl ester + S-adenosyl-L-homocysteine. Its function is as follows. Catalyzes the methyl esterification of L-isoaspartyl residues in peptides and proteins that result from spontaneous decomposition of normal L-aspartyl and L-asparaginyl residues. It plays a role in the repair and/or degradation of damaged proteins. The sequence is that of Protein-L-isoaspartate O-methyltransferase from Rhodopseudomonas palustris (strain BisB5).